Here is a 360-residue protein sequence, read N- to C-terminus: Histidinol-phosphate aminotransferase (360 aa).

Position 219 is an N6-(pyridoxal phosphate)lysine (lysine 219).

Belongs to the class-II pyridoxal-phosphate-dependent aminotransferase family. Histidinol-phosphate aminotransferase subfamily. As to quaternary structure, homodimer. The cofactor is pyridoxal 5'-phosphate.

It catalyses the reaction L-histidinol phosphate + 2-oxoglutarate = 3-(imidazol-4-yl)-2-oxopropyl phosphate + L-glutamate. The protein operates within amino-acid biosynthesis; L-histidine biosynthesis; L-histidine from 5-phospho-alpha-D-ribose 1-diphosphate: step 7/9. The polypeptide is Histidinol-phosphate aminotransferase (Jannaschia sp. (strain CCS1)).